We begin with the raw amino-acid sequence, 515 residues long: Putative ribose/galactose/methyl galactoside import ATP-binding protein (515 aa).

2 consecutive ABC transporter domains span residues 25–261 and 268–515; these read LEVL…VGRE and LREK…SGLN. 57-64 serves as a coordination point for ATP; it reads GENGAGKS.

It belongs to the ABC transporter superfamily. Carbohydrate importer 2 (CUT2) (TC 3.A.1.2) family.

The protein resides in the cell inner membrane. It carries out the reaction D-ribose(out) + ATP + H2O = D-ribose(in) + ADP + phosphate + H(+). It catalyses the reaction D-galactose(out) + ATP + H2O = D-galactose(in) + ADP + phosphate + H(+). Functionally, part of an ABC transporter complex involved in carbohydrate import. Could be involved in ribose, galactose and/or methyl galactoside import. Responsible for energy coupling to the transport system. This chain is Putative ribose/galactose/methyl galactoside import ATP-binding protein, found in Pseudomonas fluorescens (strain ATCC BAA-477 / NRRL B-23932 / Pf-5).